The following is a 905-amino-acid chain: Coatomer subunit beta' (905 aa).

WD repeat units lie at residues 13-52 (AMSD…LVKT), 55-94 (VCDL…RVHM), 97-136 (AHSD…SCSQ), 140-180 (GHTH…PNFT), 183-224 (GHEK…CVQT), 227-266 (GHAQ…LEST), 350-388 (SCEI…NKSF), and 390-425 (SAQE…KSFK). An N6-acetyllysine modification is found at Lys-627. A WD 9 repeat occupies 746 to 783 (IRTGRLPEAAFLARTYLPSQVSRVVKLWRENLSKVNQK). Residues 837 to 905 (EEAKRFQPSR…INLDEDILDD (69 aa)) are disordered. Ser-859 carries the post-translational modification Phosphoserine. Residues 867–891 (QTTHKEEKSFQELEDDLDTMELEDI) are a coiled coil. A compositionally biased stretch (acidic residues) spans 878–905 (ELEDDLDTMELEDIDTTDINLDEDILDD).

Belongs to the WD repeat COPB2 family. In terms of assembly, oligomeric complex that consists of at least the alpha, beta, beta', gamma, delta, epsilon and zeta subunits. Probably interacts with PEX11A. Interacts with JAGN1. Interacts with SCYL1.

The protein resides in the cytoplasm. It is found in the cytosol. Its subcellular location is the golgi apparatus membrane. The protein localises to the cytoplasmic vesicle. It localises to the COPI-coated vesicle membrane. The coatomer is a cytosolic protein complex that binds to dilysine motifs and reversibly associates with Golgi non-clathrin-coated vesicles, which further mediate biosynthetic protein transport from the ER, via the Golgi up to the trans Golgi network. Coatomer complex is required for budding from Golgi membranes, and is essential for the retrograde Golgi-to-ER transport of dilysine-tagged proteins. In mammals, the coatomer can only be recruited by membranes associated to ADP-ribosylation factors (ARFs), which are small GTP-binding proteins; the complex also influences the Golgi structural integrity, as well as the processing, activity, and endocytic recycling of LDL receptors. Its function is as follows. This coatomer complex protein, essential for Golgi budding and vesicular trafficking, is a selective binding protein (RACK) for protein kinase C, epsilon type. It binds to Golgi membranes in a GTP-dependent manner. The protein is Coatomer subunit beta' (Copb2) of Rattus norvegicus (Rat).